We begin with the raw amino-acid sequence, 556 residues long: Beta-hexosaminidase subunit beta (556 aa).

A signal peptide spans Met1–Ala42. Positions Ala43 to Lys121 are excised as a propeptide. Residue Asn84 is glycosylated (N-linked (GlcNAc...) asparagine). Cys91 and Cys137 are joined by a disulfide. N-linked (GlcNAc...) asparagine glycosylation is found at Asn142, Asn190, and Asn327. 2 cysteine pairs are disulfide-bonded: Cys309–Cys360 and Cys534–Cys551. Glu355 serves as the catalytic Proton donor.

It belongs to the glycosyl hydrolase 20 family. As to quaternary structure, there are 3 forms of beta-hexosaminidase: hexosaminidase A is a heterodimer composed of one subunit alpha and one subunit beta (chain A and B); hexosaminidase B is a homodimer of two beta subunits (two chains A and B); hexosaminidase S is a homodimer of two alpha subunits. The composition of the dimer (isozyme A versus isozyme S) has a significant effect on the substrate specificity of the alpha subunit active site. Post-translationally, N-linked glycans at Asn-142 and Asn-190 consist of Man(3)-GlcNAc(2) and Man(5 to 7)-GlcNAc(2), respectively. The beta-A and beta-B chains are produced by proteolytic processing of the precursor beta chain.

It localises to the lysosome. It is found in the cytoplasmic vesicle. The protein localises to the secretory vesicle. Its subcellular location is the cortical granule. The catalysed reaction is Hydrolysis of terminal non-reducing N-acetyl-D-hexosamine residues in N-acetyl-beta-D-hexosaminides.. It catalyses the reaction N-acetyl-beta-D-galactosaminyl-(1-&gt;4)-beta-D-3-sulfogalactosyl-(1-&gt;4)-beta-D-glucosyl-(1&lt;-&gt;1')-ceramide + H2O = a beta-D-3-sulfogalactosyl-(1-&gt;4)-beta-D-glucosyl-(1&lt;-&gt;1')-ceramide + N-acetyl-beta-D-galactosamine. It carries out the reaction a ganglioside GM2 (d18:1(4E)) + H2O = a ganglioside GM3 (d18:1(4E)) + N-acetyl-beta-D-galactosamine. The enzyme catalyses a ganglioside GM2 + H2O = a ganglioside GM3 + N-acetyl-beta-D-galactosamine. The catalysed reaction is beta-D-GalNAc-(1-&gt;4)-alpha-L-IdoA-(1-&gt;3)-beta-D-GalNAc-4-sulfate-(1-&gt;4)-alpha-L-IdoA-(1-&gt;3)-D-GalNAc-4-sulfate + H2O = alpha-L-IdoA-(1-&gt;3)-beta-D-GalNAc-4-sulfate-(1-&gt;4)-alpha-L-IdoA-(1-&gt;3)-D-GalNAc-4-sulfate + N-acetyl-D-galactosamine. It catalyses the reaction N-acetyl-beta-D-6-sulfogalactosaminyl-(1-&gt;4)-alpha-L-iduronyl-(1-&gt;3)-N-acetyl-D-6-sulfogalactosamine + H2O = alpha-L-iduronyl-(1-&gt;3)-N-acetyl-D-6-sulfogalactosamine + N-acetyl-D-6-sulfogalactosamine. Addition of GM2A stimulates the hydrolysis of sulfated glycosphingolipid SM2 and the ganglioside GM2. Hydrolyzes the non-reducing end N-acetyl-D-hexosamine and/or sulfated N-acetyl-D-hexosamine of glycoconjugates, such as the oligosaccharide moieties from proteins and neutral glycolipids, or from certain mucopolysaccharides. The isozyme B does not hydrolyze each of these substrates, however hydrolyzes efficiently neutral oligosaccharide. Only the isozyme A is responsible for the degradation of GM2 gangliosides in the presence of GM2A. During fertilization is responsible, at least in part, for the zona block to polyspermy. Present in the cortical granules of non-activated oocytes, is exocytosed during the cortical reaction in response to oocyte activation and inactivates the sperm galactosyltransferase-binding site, accounting for the block in sperm binding to the zona pellucida. The protein is Beta-hexosaminidase subunit beta of Homo sapiens (Human).